The chain runs to 273 residues: Ethanolamine ammonia-lyase small subunit (273 aa).

Positions 164, 185, and 214 each coordinate adenosylcob(III)alamin.

The protein belongs to the EutC family. In terms of assembly, the basic unit is a heterodimer which dimerizes to form tetramers. The heterotetramers trimerize; 6 large subunits form a core ring with 6 small subunits projecting outwards. Requires adenosylcob(III)alamin as cofactor.

It is found in the bacterial microcompartment. The enzyme catalyses ethanolamine = acetaldehyde + NH4(+). It functions in the pathway amine and polyamine degradation; ethanolamine degradation. In terms of biological role, catalyzes the deamination of various vicinal amino-alcohols to oxo compounds. Allows this organism to utilize ethanolamine as the sole source of nitrogen and carbon in the presence of external vitamin B12. The protein is Ethanolamine ammonia-lyase small subunit of Pseudomonas aeruginosa (strain LESB58).